A 236-amino-acid polypeptide reads, in one-letter code: tRNA1(Val) (adenine(37)-N6)-methyltransferase (236 aa).

Belongs to the methyltransferase superfamily. tRNA (adenine-N(6)-)-methyltransferase family.

It localises to the cytoplasm. The enzyme catalyses adenosine(37) in tRNA1(Val) + S-adenosyl-L-methionine = N(6)-methyladenosine(37) in tRNA1(Val) + S-adenosyl-L-homocysteine + H(+). In terms of biological role, specifically methylates the adenine in position 37 of tRNA(1)(Val) (anticodon cmo5UAC). This chain is tRNA1(Val) (adenine(37)-N6)-methyltransferase, found in Histophilus somni (strain 2336) (Haemophilus somnus).